We begin with the raw amino-acid sequence, 281 residues long: Arylamine N-acetyltransferase (281 aa).

Cysteine 69 serves as the catalytic Acyl-thioester intermediate. Catalysis depends on residues histidine 107 and aspartate 122. Lysine 214 and lysine 281 each carry N6-acetyllysine.

It belongs to the arylamine N-acetyltransferase family. As to quaternary structure, homodimer. Acetylated on Lys-214 and Lys-281. Deacetylated by CobB.

It is found in the cytoplasm. It catalyses the reaction an arylamine + acetyl-CoA = an N-acetylarylamine + CoA. The enzyme catalyses an N-hydroxyarylamine + acetyl-CoA = an N-acetoxyarylamine + CoA. With respect to regulation, inhibited by salicylic acid, acetylsalicylic acid, 2,6-dichrolo-4-nitrophenol, N-ethylmaleimide and iodoacetamide. Functionally, catalyzes the acetyl-CoA-dependent N-acetylation of aromatic amines, and, probably, the O-acetylation of N-hydroxyarylamines. In vitro, catalyzes the N-acetylation of various arylamines such as aminobenzoic acid, aminophenol, aminotoluene, phenetidine, anisidine, aniline, isoniazid and 2-amino-fluorene. N-hydroxyarylamine O-acetyltransferase activity has not been assayed directly, however, NhoA activity is required for the mutagenicity of nitroaromatic compounds, suggesting that it also has O-acetyltransferase activity. This Escherichia coli (strain K12) protein is Arylamine N-acetyltransferase (nhoA).